The chain runs to 211 residues: MVVSKQEAISFSVTSLGWVGAIVSCVLPVWRVTFPDDETDPDATIWEGLWHICQVRENRWIQCTLYDTRILVAQDIKVSRVFMVICTIGTWLGLLLCVLGDWRINCFMNFTIEENLLKVAGGMFLSVGLLMLVPLSWVTHNIIHGFFNPLLGFSKKVQMGSSLSLAWTSSLLLLLGGILLCVNIPVCRDFPRCIETPSARPSGANNDTLDV.

The Cytoplasmic segment spans residues 1–8 (MVVSKQEA). Residues 9–29 (ISFSVTSLGWVGAIVSCVLPV) traverse the membrane as a helical segment. At 30 to 80 (WRVTFPDDETDPDATIWEGLWHICQVRENRWIQCTLYDTRILVAQDIKVSR) the chain is on the extracellular side. A helical transmembrane segment spans residues 81 to 101 (VFMVICTIGTWLGLLLCVLGD). Residues 102–118 (WRINCFMNFTIEENLLK) are Cytoplasmic-facing. A helical membrane pass occupies residues 119–139 (VAGGMFLSVGLLMLVPLSWVT). Residues 140–165 (HNIIHGFFNPLLGFSKKVQMGSSLSL) are Extracellular-facing. A helical membrane pass occupies residues 166–186 (AWTSSLLLLLGGILLCVNIPV). Over 187–211 (CRDFPRCIETPSARPSGANNDTLDV) the chain is Cytoplasmic.

It belongs to the claudin family.

Its subcellular location is the cell junction. It localises to the tight junction. The protein resides in the cell membrane. Its function is as follows. Plays a major role in tight junction-specific obliteration of the intercellular space, through calcium-independent cell-adhesion activity. The sequence is that of Claudin-13 (Cldn13) from Mus musculus (Mouse).